Here is a 457-residue protein sequence, read N- to C-terminus: Chromosomal replication initiator protein DnaA (457 aa).

The tract at residues 1-90 (MAVSLWQQCI…RPSAKPQAPA (90 aa)) is domain I, interacts with DnaA modulators. Residues 79–120 (GSRPSAKPQAPAPAAVKAAAPQPKPGNSFVSQPEPAVSNHRS) are disordered. Over residues 84-99 (AKPQAPAPAAVKAAAP) the composition is skewed to low complexity. The tract at residues 91 to 120 (PAAVKAAAPQPKPGNSFVSQPEPAVSNHRS) is domain II. Positions 121 to 337 (NINPTYQFDN…GALNRVIANA (217 aa)) are domain III, AAA+ region. ATP-binding residues include glycine 165, glycine 167, lysine 168, and threonine 169. The segment at 338–457 (NFTGRPITID…YANLIRTLSS (120 aa)) is domain IV, binds dsDNA.

It belongs to the DnaA family. In terms of assembly, oligomerizes as a right-handed, spiral filament on DNA at oriC.

Its subcellular location is the cytoplasm. In terms of biological role, plays an essential role in the initiation and regulation of chromosomal replication. ATP-DnaA binds to the origin of replication (oriC) to initiate formation of the DNA replication initiation complex once per cell cycle. Binds the DnaA box (a 9 base pair repeat at the origin) and separates the double-stranded (ds)DNA. Forms a right-handed helical filament on oriC DNA; dsDNA binds to the exterior of the filament while single-stranded (ss)DNA is stabiized in the filament's interior. The ATP-DnaA-oriC complex binds and stabilizes one strand of the AT-rich DNA unwinding element (DUE), permitting loading of DNA polymerase. After initiation quickly degrades to an ADP-DnaA complex that is not apt for DNA replication. Binds acidic phospholipids. In Shewanella amazonensis (strain ATCC BAA-1098 / SB2B), this protein is Chromosomal replication initiator protein DnaA.